Reading from the N-terminus, the 550-residue chain is CTP synthase (550 aa).

Positions 1 to 277 (MNGSADAGPR…GRAVERALGL (277 aa)) are amidoligase domain. Ser23 contacts CTP. Ser23 is a UTP binding site. ATP is bound at residue 24–29 (SLGKGI). Residue Tyr64 participates in L-glutamine binding. Asp81 contributes to the ATP binding site. Residues Asp81 and Glu151 each contribute to the Mg(2+) site. Residues 158–160 (DIE), 198–203 (KTKPTQ), and Lys234 each bind CTP. Residues 198-203 (KTKPTQ) and Lys234 each bind UTP. Val252 lines the ATP pocket. Residues 302-549 (KIAIAGKYVK…VEAALAYQER (248 aa)) enclose the Glutamine amidotransferase type-1 domain. Gly364 provides a ligand contact to L-glutamine. The active-site Nucleophile; for glutamine hydrolysis is the Cys391. Residues 392–395 (LGLQ), Glu415, and Arg472 contribute to the L-glutamine site. Residues His522 and Glu524 contribute to the active site.

This sequence belongs to the CTP synthase family. In terms of assembly, homotetramer in the presence of UTP and ATP. Is in a protein concentration-dependent equilibrium between monomer, dimer, and tetramer in the absence of UTP and ATP.

The catalysed reaction is UTP + L-glutamine + ATP + H2O = CTP + L-glutamate + ADP + phosphate + 2 H(+). It carries out the reaction L-glutamine + H2O = L-glutamate + NH4(+). The enzyme catalyses UTP + NH4(+) + ATP = CTP + ADP + phosphate + 2 H(+). The protein operates within pyrimidine metabolism; CTP biosynthesis via de novo pathway; CTP from UDP: step 2/2. Allosterically activated by GTP, when glutamine is the substrate. GTP has no effect on the reaction when ammonia is the substrate. The allosteric effector GTP functions by stabilizing the protein conformation that binds the tetrahedral intermediate(s) formed during glutamine hydrolysis. Inhibited by the product CTP, via allosteric rather than competitive inhibition. In terms of biological role, catalyzes the ATP-dependent amination of UTP to CTP with either L-glutamine or ammonia as the source of nitrogen. Regulates intracellular CTP levels through interactions with the four ribonucleotide triphosphates. The sequence is that of CTP synthase from Thermus thermophilus (strain ATCC 27634 / DSM 579 / HB8).